The chain runs to 748 residues: ATP-dependent rRNA helicase SPB4 (748 aa).

The Q motif motif lies at 15 to 43 (WAKLNPPLSPWILDVINSMGFKNMTPVQA). In terms of domain architecture, Helicase ATP-binding spans 46 to 260 (IPRAVKNQDC…GLGLRNPVRI (215 aa)). Residue 59 to 66 (AVTGSGKT) participates in ATP binding. The interval 119–156 (ESEEETGDVEAHAPPFASSSRSPSPQTPDKPLFPLPML) is disordered. The segment covering 132–142 (PPFASSSRSPS) has biased composition (low complexity). Residues 143–152 (PQTPDKPLFP) show a composition bias toward pro residues. The DEAD box signature appears at 207 to 210 (DEAD). Residues 295–460 (KTLQLIRLLL…KAQRSILDFL (166 aa)) form the Helicase C-terminal domain. The tract at residues 614-748 (AQRADNQSSN…IGGGMFDDLE (135 aa)) is disordered. Basic and acidic residues-rich tracts occupy residues 626-669 (ARAE…KYEW) and 708-730 (EIGK…KESS). The span at 732–748 (GGAGGGGIGGGMFDDLE) shows a compositional bias: gly residues.

Belongs to the DEAD box helicase family. DDX55/SPB4 subfamily. Component of pre-60S ribosomal complexes.

The protein resides in the nucleus. The protein localises to the nucleolus. It catalyses the reaction ATP + H2O = ADP + phosphate + H(+). In terms of biological role, ATP-binding RNA helicase involved in the biogenesis of 60S ribosomal subunits. Binds 90S pre-ribosomal particles and dissociates from pre-60S ribosomal particles after processing of 27SB pre-rRNA. Required for the normal formation of 18S rRNA through the processing of pre-rRNAs at sites A0, A1 and A2, and the normal formation of 25S and 5.8S rRNAs through the processing of pre-rRNAs at sites C1 and C2. This Cryptococcus neoformans var. neoformans serotype D (strain B-3501A) (Filobasidiella neoformans) protein is ATP-dependent rRNA helicase SPB4.